We begin with the raw amino-acid sequence, 137 residues long: Large ribosomal subunit protein uL16 (137 aa).

Residues 1–17 (MLQPKRTKFRKTHKGRN) show a composition bias toward basic residues. Residues 1–24 (MLQPKRTKFRKTHKGRNRGLANSG) are disordered.

It belongs to the universal ribosomal protein uL16 family. As to quaternary structure, part of the 50S ribosomal subunit.

Functionally, binds 23S rRNA and is also seen to make contacts with the A and possibly P site tRNAs. The protein is Large ribosomal subunit protein uL16 of Aeromonas hydrophila subsp. hydrophila (strain ATCC 7966 / DSM 30187 / BCRC 13018 / CCUG 14551 / JCM 1027 / KCTC 2358 / NCIMB 9240 / NCTC 8049).